The chain runs to 771 residues: Solute carrier family 7 member 14 (771 aa).

The next 6 helical transmembrane spans lie at 58–78 (LISLGVGSCVGTGMYVVSGLV), 83–103 (AGPGVIVSFIIAAVASILSGV), 130–150 (FVAFFIGWNLILEYLIGTAAG), 187–207 (YPDLLALVIAIIVTIIVALGV), 216–236 (VLNVLNLAVWVFIMIAGFFFI), and 251–271 (WSGVLQGAATCFYAFIGFDII). A glycan (N-linked (GlcNAc...) asparagine) is linked at N282. A run of 5 helical transmembrane segments spans residues 291-311 (ASLVICLTAYVSVSMILTLMV), 336-356 (FVVAIGSVAGLTVSLLGSLFP), 360-380 (VIYAMAGDGLLFRFLAHVSSY), 384-404 (PVVACIVSGFLAALLSLLVSL), and 407-427 (LIEMMSIGTLLAYTLVSVCVL). S465, S468, and S488 each carry phosphoserine. 4 consecutive transmembrane segments (helical) span residues 565-585 (VTICVLLLFILMFVFCSFIIF), 596-616 (WAILLVVLMVLLISALVFVIL), 628-648 (MAPCLPFVPAFAMLVNIYLML), and 655-675 (WIRFAVWCFVGMLIYFGYGIW). The N-linked (GlcNAc...) asparagine glycan is linked to N676. Residues 712–771 (TEGESQENWGGPAEDKGFYYQQMSDTQPNTRTSSKAKSKSKHKQNSEALIANDELDYSPE) form a disordered region. A compositionally biased stretch (polar residues) spans 732 to 743 (QQMSDTQPNTRT). Basic residues predominate over residues 745–754 (SKAKSKSKHK). Phosphoserine occurs at positions 757 and 769.

It belongs to the amino acid-polyamine-organocation (APC) superfamily. Cationic amino acid transporter (CAT) (TC 2.A.3.3) family.

The protein localises to the lysosome membrane. The enzyme catalyses 4-aminobutanoate(in) = 4-aminobutanoate(out). In terms of biological role, imports 4-aminobutanoate (GABA) into lysosomes. May act as a GABA sensor that regulates mTORC2-dependent INS signaling and gluconeogenesis. The transport mechanism and substrate selectivity remain to be elucidated. The chain is Solute carrier family 7 member 14 from Bos taurus (Bovine).